Here is a 194-residue protein sequence, read N- to C-terminus: Cytochrome c biogenesis ATP-binding export protein CcmA (194 aa).

One can recognise an ABC transporter domain in the interval 5–194 (LALDGVACIR…LDELVMGVLA (190 aa)). Position 37–44 (37–44 (GPNGAGKS)) interacts with ATP.

The protein belongs to the ABC transporter superfamily. CcmA exporter (TC 3.A.1.107) family. The complex is composed of two ATP-binding proteins (CcmA) and two transmembrane proteins (CcmB).

The protein localises to the cell inner membrane. The enzyme catalyses heme b(in) + ATP + H2O = heme b(out) + ADP + phosphate + H(+). Functionally, part of the ABC transporter complex CcmAB involved in the biogenesis of c-type cytochromes; once thought to export heme, this seems not to be the case, but its exact role is uncertain. Responsible for energy coupling to the transport system. The chain is Cytochrome c biogenesis ATP-binding export protein CcmA from Sphingopyxis alaskensis (strain DSM 13593 / LMG 18877 / RB2256) (Sphingomonas alaskensis).